Reading from the N-terminus, the 193-residue chain is Acyl carrier protein phosphodiesterase (193 aa).

The protein belongs to the AcpH family.

The enzyme catalyses holo-[ACP] + H2O = apo-[ACP] + (R)-4'-phosphopantetheine + H(+). In terms of biological role, converts holo-ACP to apo-ACP by hydrolytic cleavage of the phosphopantetheine prosthetic group from ACP. In Salmonella dublin (strain CT_02021853), this protein is Acyl carrier protein phosphodiesterase.